The sequence spans 163 residues: E3 ubiquitin-protein ligase ATL23 (163 aa).

The helical transmembrane segment at 35-55 threads the bilayer; that stretch reads ALLLPCVGMCIVFLIYLFLLW. An RING-type; atypical zinc finger spans residues 104 to 146; it reads CAVCLEDIESGQSTRLVPGCNHGFHQLCADTWLSNHTVCPVCR.

The protein belongs to the RING-type zinc finger family. ATL subfamily.

It is found in the membrane. It catalyses the reaction S-ubiquitinyl-[E2 ubiquitin-conjugating enzyme]-L-cysteine + [acceptor protein]-L-lysine = [E2 ubiquitin-conjugating enzyme]-L-cysteine + N(6)-ubiquitinyl-[acceptor protein]-L-lysine.. The protein operates within protein modification; protein ubiquitination. Its function is as follows. E3 ubiquitin-protein ligase able to catalyze polyubiquitination with ubiquitin-conjugating enzyme E2 UBC8, UBC10, UBC11, UBC28 and UBC29 in vitro. The sequence is that of E3 ubiquitin-protein ligase ATL23 (ATL23) from Arabidopsis thaliana (Mouse-ear cress).